The following is a 133-amino-acid chain: NADPH-dependent 7-cyano-7-deazaguanine reductase (133 aa).

Cys-49 acts as the Thioimide intermediate in catalysis. Asp-56 acts as the Proton donor in catalysis. Substrate-binding positions include 71–73 (IEL) and 90–91 (HE).

This sequence belongs to the GTP cyclohydrolase I family. QueF type 1 subfamily.

It localises to the cytoplasm. The enzyme catalyses 7-aminomethyl-7-carbaguanine + 2 NADP(+) = 7-cyano-7-deazaguanine + 2 NADPH + 3 H(+). Its pathway is tRNA modification; tRNA-queuosine biosynthesis. Its function is as follows. Catalyzes the NADPH-dependent reduction of 7-cyano-7-deazaguanine (preQ0) to 7-aminomethyl-7-deazaguanine (preQ1). This Leptospira interrogans serogroup Icterohaemorrhagiae serovar copenhageni (strain Fiocruz L1-130) protein is NADPH-dependent 7-cyano-7-deazaguanine reductase.